Reading from the N-terminus, the 177-residue chain is Myosin regulatory light chain 2 (177 aa).

Residues 1 to 16 (MSRKSGSRSSSKRSKK) are compositionally biased toward basic residues. Residues 1–24 (MSRKSGSRSSSKRSKKSGGGSNVF) are disordered. IgE-binding epitope stretches follow at residues 13–30 (RSKK…FTQR), 22–48 (NVFD…DKDG), 49–66 (VIGK…GRIA), 58–90 (TFDE…LLNM), 79–99 (PAPI…TGES), and 118–141 (NIDC…QEAD). The EF-hand 1 domain maps to 30–65 (RQVAEFKEGFQLMDRDKDGVIGKTDLRGTFDEIGRI). Asp-43, Asp-45, Asp-47, and Asp-54 together coordinate Ca(2+). Residues 135–170 (FSSQEADDALDQMDIDDGGKIDVQGVIQMLTAGGGD) enclose the EF-hand 2 domain.

Myosin is a hexamer of 2 heavy chains and 4 light chains. Expressed in tail muscle (at protein level).

The chain is Myosin regulatory light chain 2 from Penaeus vannamei (Whiteleg shrimp).